We begin with the raw amino-acid sequence, 464 residues long: MEEIAKEYDVIVLGTGLTECILSGVLSVKGKKVLHIDRNDHYGGEAASLNLQALFKKYGNYNSGEEPWAKYGRNTDWNIDLVPKFLMSSGELTNILVSTDVTRYLEFKQVAGSFVQQGSGPKATVAKVPSDAAEALRSPLMGIFEKRRMKSFIEWVGTFDLKDPATHKGLDLSSCTMKDVYDKFGLETGTKDFIGHAMALYLSDDYISKPGGAPEAIDRIRLYGNSVARYGKSPYIYPLFGLGDLPQGFARLSAIYGGTYMLNTNIDELLYEDGKAVGIKATMTGIEPEMKFETRAKMILGDPSYFSDKVKVVGHVLRAICVLKHPLAGTSDADSCQLIIPQSQVGRKNDIYIACVSSAHSVCPKGYYIAIVSTIAETSANHHLELQPGLERLGKIEEQFMGPPIPLYAPIEDGTSSGIFISKSYDATSHFETTTDDVKDIYRRATGEELKVEGLRDLQVAGDE.

Belongs to the Rab GDI family. As to quaternary structure, interacts with the GDP-bound form of Rab GTPase YPT7.

Its function is as follows. Regulates the GDP/GTP exchange reaction of YPT7 by inhibiting the dissociation of GDP from it, and the subsequent binding of GTP to YTP7. The sequence is that of Rab GDP-dissociation inhibitor (GDI1) from Pyricularia oryzae (strain 70-15 / ATCC MYA-4617 / FGSC 8958) (Rice blast fungus).